The following is a 200-amino-acid chain: Holliday junction branch migration complex subunit RuvA (200 aa).

Positions 1–63 are domain I; that stretch reads MIGKLSGKID…EEHIHLYGFL (63 aa). A domain II region spans residues 64-142; the sequence is TLEEKNFFNL…KIFSSSAIIK (79 aa). A flexible linker region spans residues 142 to 146; it reads KDSSN. The tract at residues 147 to 200 is domain III; that stretch reads ISSVEINEVIKALVNLGFTRFEAQNTVQGIITQNTKISIDELIKTALKNRNSSF.

Belongs to the RuvA family. Homotetramer. Forms an RuvA(8)-RuvB(12)-Holliday junction (HJ) complex. HJ DNA is sandwiched between 2 RuvA tetramers; dsDNA enters through RuvA and exits via RuvB. An RuvB hexamer assembles on each DNA strand where it exits the tetramer. Each RuvB hexamer is contacted by two RuvA subunits (via domain III) on 2 adjacent RuvB subunits; this complex drives branch migration. In the full resolvosome a probable DNA-RuvA(4)-RuvB(12)-RuvC(2) complex forms which resolves the HJ.

The protein localises to the cytoplasm. Functionally, the RuvA-RuvB-RuvC complex processes Holliday junction (HJ) DNA during genetic recombination and DNA repair, while the RuvA-RuvB complex plays an important role in the rescue of blocked DNA replication forks via replication fork reversal (RFR). RuvA specifically binds to HJ cruciform DNA, conferring on it an open structure. The RuvB hexamer acts as an ATP-dependent pump, pulling dsDNA into and through the RuvAB complex. HJ branch migration allows RuvC to scan DNA until it finds its consensus sequence, where it cleaves and resolves the cruciform DNA. In Rickettsia typhi (strain ATCC VR-144 / Wilmington), this protein is Holliday junction branch migration complex subunit RuvA.